Reading from the N-terminus, the 313-residue chain is Beta-ketoacyl-[acyl-carrier-protein] synthase III (313 aa).

Active-site residues include Cys-112 and His-238. Residues 239–243 form an ACP-binding region; that stretch reads QANIR. The active site involves Asn-268.

It belongs to the thiolase-like superfamily. FabH family. In terms of assembly, homodimer.

It is found in the cytoplasm. The enzyme catalyses malonyl-[ACP] + acetyl-CoA + H(+) = 3-oxobutanoyl-[ACP] + CO2 + CoA. The protein operates within lipid metabolism; fatty acid biosynthesis. In terms of biological role, catalyzes the condensation reaction of fatty acid synthesis by the addition to an acyl acceptor of two carbons from malonyl-ACP. Catalyzes the first condensation reaction which initiates fatty acid synthesis and may therefore play a role in governing the total rate of fatty acid production. Possesses both acetoacetyl-ACP synthase and acetyl transacylase activities. Its substrate specificity determines the biosynthesis of branched-chain and/or straight-chain of fatty acids. In Staphylococcus aureus (strain bovine RF122 / ET3-1), this protein is Beta-ketoacyl-[acyl-carrier-protein] synthase III.